The following is a 67-amino-acid chain: Small ribosomal subunit protein eS31 (67 aa).

The Zn(2+) site is built by Cys35, Cys38, Cys54, and Cys57. The C4-type zinc-finger motif lies at 35-57 (CPRCGSIMAHHMKPLERWACGKC).

Belongs to the eukaryotic ribosomal protein eS31 family. Part of the 30S ribosomal subunit. Zn(2+) serves as cofactor.

This Sulfolobus acidocaldarius (strain ATCC 33909 / DSM 639 / JCM 8929 / NBRC 15157 / NCIMB 11770) protein is Small ribosomal subunit protein eS31.